A 221-amino-acid chain; its full sequence is Endonuclease V (221 aa).

Mg(2+) contacts are provided by Asp44 and Asp112.

It belongs to the endonuclease V family. Mg(2+) is required as a cofactor.

The protein localises to the cytoplasm. It carries out the reaction Endonucleolytic cleavage at apurinic or apyrimidinic sites to products with a 5'-phosphate.. Functionally, DNA repair enzyme involved in the repair of deaminated bases. Selectively cleaves double-stranded DNA at the second phosphodiester bond 3' to a deoxyinosine leaving behind the intact lesion on the nicked DNA. The chain is Endonuclease V from Nostoc punctiforme (strain ATCC 29133 / PCC 73102).